The chain runs to 37 residues: Cytochrome b6-f complex subunit 5 (37 aa).

Residues Leu-5 to Ala-25 form a helical membrane-spanning segment.

Belongs to the PetG family. As to quaternary structure, the 4 large subunits of the cytochrome b6-f complex are cytochrome b6, subunit IV (17 kDa polypeptide, PetD), cytochrome f and the Rieske protein, while the 4 small subunits are PetG, PetL, PetM and PetN. The complex functions as a dimer.

Its subcellular location is the plastid. The protein localises to the chloroplast thylakoid membrane. In terms of biological role, component of the cytochrome b6-f complex, which mediates electron transfer between photosystem II (PSII) and photosystem I (PSI), cyclic electron flow around PSI, and state transitions. PetG is required for either the stability or assembly of the cytochrome b6-f complex. The protein is Cytochrome b6-f complex subunit 5 of Guillardia theta (Cryptophyte).